The sequence spans 361 residues: Peptide chain release factor 1 (361 aa).

Q236 carries the N5-methylglutamine modification.

Belongs to the prokaryotic/mitochondrial release factor family. Methylated by PrmC. Methylation increases the termination efficiency of RF1.

The protein localises to the cytoplasm. In terms of biological role, peptide chain release factor 1 directs the termination of translation in response to the peptide chain termination codons UAG and UAA. The protein is Peptide chain release factor 1 of Levilactobacillus brevis (strain ATCC 367 / BCRC 12310 / CIP 105137 / JCM 1170 / LMG 11437 / NCIMB 947 / NCTC 947) (Lactobacillus brevis).